The sequence spans 379 residues: MSNEIKSISSSNSSCPPNEARSGERDKALSLVLGQIERNFGKGSIMRLGDASKMRVETISTGALTLDLALGGGYPKGRVVEVYGPESSGKTTLTLHAIAEVQKRGGVAAFVDAEHALDPVYAASLGVDIENLLVSQPDTGEMALEIVDQLIRSSAVDLVVVDSVAALTPRSEIEGEMGDHAVGSQARLMSQAMRKITGNIGKSGCTVIFLNQLRLKIGVTYGNPETTTGGNALKFYASVRLDIRRIQTLKRGTEEYGIRAKVKVAKNKVAPPFRIAEFDILFGKGISTLGCLLDMAEETNIVTRKGAWYSYEGDNIGQGRDNTITWLEENSEAKEKIEKLVRQKLTEGSEVSANSMKPLASAARAANTPPVMKKISNAA.

Positions 1 to 14 (MSNEIKSISSSNSS) are enriched in low complexity. The segment at 1–24 (MSNEIKSISSSNSSCPPNEARSGE) is disordered. Residue 84 to 91 (GPESSGKT) participates in ATP binding.

This sequence belongs to the RecA family.

Its subcellular location is the cytoplasm. In terms of biological role, can catalyze the hydrolysis of ATP in the presence of single-stranded DNA, the ATP-dependent uptake of single-stranded DNA by duplex DNA, and the ATP-dependent hybridization of homologous single-stranded DNAs. It interacts with LexA causing its activation and leading to its autocatalytic cleavage. The sequence is that of Protein RecA from Prochlorococcus marinus (strain SARG / CCMP1375 / SS120).